Consider the following 862-residue polypeptide: ATP-dependent helicase Lhr-Core (862 aa).

Residues Gln37, Lys60, Thr61, Asp178, Glu179, Val360, Arg377, and His380 each contribute to the ATP site. A Helicase ATP-binding domain is found at 41–233; the sequence is IMDIHRGRNV…FLVGYSYGSE (193 aa). The DEAH box motif lies at 178–181; that stretch reads DEIH. Residues 269-424 enclose the Helicase C-terminal domain; it reads ALYDILHDLI…SIKVPENCLD (156 aa). The interval 425–513 is WH domain; it reads VLAQHIYGMA…LYSTNIGTIP (89 aa). Positions 514-862 are domain 4; it reads DRSAAVVKCG…HQAIIDEIKR (349 aa).

This sequence belongs to the Lhr helicase family. Lhr-Core subfamily. As to quaternary structure, monomer.

It catalyses the reaction Couples ATP hydrolysis with the unwinding of duplex DNA by translocating in the 3'-5' direction.. The catalysed reaction is ATP + H2O = ADP + phosphate + H(+). Functionally, DNA helicase that translocates in a 3'-5' direction on single-stranded (ss)DNA, probably involved in DNA repair. Most active on three- or four-stranded forked DNA; flayed structures and Holliday junction (HJ) substrates are unwound slightly less well. Also unwinds 3'-tailed duplexes; both RNA:DNA hybrids and double-stranded (ds)DNA with a 3'-single strand (ss)DNA loading strand are unwound. Substrates where the helicase loads on a 3'-ssRNA tail (DNA:RNA and RNA:RNA) were not tested. Blunt-ended dsDNA is not a substrate. Probably involved in replication-coupled DNA repair; remodeling of fork DNA after binding by Lhr generates ssDNA for ATP-dependent DNA translocation. This chain is ATP-dependent helicase Lhr-Core, found in Methanothermobacter thermautotrophicus (strain ATCC 29096 / DSM 1053 / JCM 10044 / NBRC 100330 / Delta H) (Methanobacterium thermoautotrophicum).